The following is a 61-amino-acid chain: Small ribosomal subunit protein uS14 (61 aa).

The Zn(2+) site is built by cysteine 24, cysteine 27, cysteine 40, and cysteine 43.

The protein belongs to the universal ribosomal protein uS14 family. Zinc-binding uS14 subfamily. In terms of assembly, part of the 30S ribosomal subunit. Contacts proteins S3 and S10. Zn(2+) serves as cofactor.

Its function is as follows. Binds 16S rRNA, required for the assembly of 30S particles and may also be responsible for determining the conformation of the 16S rRNA at the A site. This chain is Small ribosomal subunit protein uS14, found in Geotalea daltonii (strain DSM 22248 / JCM 15807 / FRC-32) (Geobacter daltonii).